Here is a 28-residue protein sequence, read N- to C-terminus: Caerulein precursor fragment B1 (28 aa).

The protein belongs to the gastrin/cholecystokinin family. In terms of tissue distribution, expressed by the skin glands.

It is found in the secreted. Its function is as follows. Peptide CPF-B1: Has antimicrobial activity against Gram-negative bacteria E.coli ATCC 25922 (MIC=5 uM) and multidrug-resistant A.baumannii (MIC=4-8 uM), against Gram-positive bacteria S.aureus ATCC 25923 (MIC=5 uM) and methicillin-resistant S.aureus and against fungus C.albicans ATCC 90028 (MIC=25 uM). Has some hemolytic activity against human erythrocytes at high concentrations. The sequence is that of Caerulein precursor fragment B1 from Xenopus borealis (Kenyan clawed frog).